Consider the following 2149-residue polypeptide: Non-reducing polyketide synthase PvBS090_009107 (2149 aa).

An N-terminal acylcarrier protein transacylase domain (SAT) region spans residues 8-244 (YLFGDQTGEF…VRVPVHAPYH (237 aa)). The 432-residue stretch at 375-806 (QSKIAIIGLS…GGNTALLIED (432 aa)) folds into the Ketosynthase family 3 (KS3) domain. Catalysis depends on for beta-ketoacyl synthase activity residues C547, H682, and H724. The malonyl-CoA:ACP transacylase (MAT) domain stretch occupies residues 911–1231 (FVFTGQGAQY…LSAIYLAGVD (321 aa)). S1000 (for acyl/malonyl transferase activity) is an active-site residue. The product template (PT) domain stretch occupies residues 1290–1604 (TTSVQRIVET…RQVLNTVLPP (315 aa)). Positions 1294-1426 (QRIVETRDEG…CLVKFSDTHL (133 aa)) are N-terminal hotdog fold. The 306-residue stretch at 1294–1599 (QRIVETRDEG…FQGVPRQVLN (306 aa)) folds into the PKS/mFAS DH domain. The Proton acceptor; for dehydratase activity role is filled by H1326. The C-terminal hotdog fold stretch occupies residues 1454-1599 (SHRMHRGMFY…FQGVPRQVLN (146 aa)). Residue D1512 is the Proton donor; for dehydratase activity of the active site. The segment at 1604–1631 (PAGGSKAAPRTTARAVPPPPINVEKPKS) is disordered. One can recognise a Carrier 1 domain in the interval 1649–1726 (SAGPSVLVQA…DLKQLLSQAS (78 aa)). S1686 is subject to O-(pantetheine 4'-phosphoryl)serine. Low complexity-rich tracts occupy residues 1722–1731 (LSQASPSDSS) and 1744–1755 (SSSTEPSTPGTP). The tract at residues 1722 to 1763 (LSQASPSDSSDSSEESHYSFRDSSSTEPSTPGTPAFFSPKRG) is disordered. One can recognise a Carrier 2 domain in the interval 1769–1846 (VGESETIKTI…AVETALDLKP (78 aa)). An O-(pantetheine 4'-phosphoryl)serine modification is found at S1806. The tract at residues 1875–2147 (STHPPATSIL…KLSAFIGRAM (273 aa)) is thioesterase (TE) domain. Catalysis depends on S1965, which acts as the For thioesterase activity.

It carries out the reaction 6 malonyl-CoA + acetyl-CoA + 6 H(+) = naphtopyrone YWA1 + 6 CO2 + 7 CoA + H2O. Its pathway is secondary metabolite biosynthesis. It participates in pigment biosynthesis. Functionally, non-reducing polyketide synthase; part of the gene cluster 24 that mediates the biosynthesis of a pigment with an aromatic structure protecting the pigmented fungus from both ionizing and non-ionizing radiations based on a mechanism similar to melanin, that is, free radical quenching and spherical spatial arrangement. Catalyzes the biosynthesis of the gamma-naphthopyrone precursor YWA1, via condensation of one acetyl-CoA starter unit with 6 malonyl-CoA units. YWA1 is probably further processed by the additional enzymes present within the cluster 24, however these additional steps have not been characterized yet. YWA1 is not converted to DHN-melanin in Byssochlamys spectabilis since the use of the DHN-melanin pathway inhibitor pyroquilon does not result in a loss of pigmentation. In Byssochlamys spectabilis (Paecilomyces variotii), this protein is Non-reducing polyketide synthase PvBS090_009107.